The sequence spans 126 residues: Apolipoprotein C-IV (126 aa).

A signal peptide spans 1–27 (MSLLRHRLQALPSLCLCVLVLACIGAC).

The protein belongs to the apolipoprotein C4 family.

Its subcellular location is the secreted. May participate in lipoprotein metabolism. The sequence is that of Apolipoprotein C-IV (APOC4) from Aotus nancymaae (Ma's night monkey).